The chain runs to 174 residues: N5-carboxyaminoimidazole ribonucleotide mutase (174 aa).

3 residues coordinate substrate: serine 16, aspartate 19, and arginine 46.

Belongs to the AIR carboxylase family. Class I subfamily.

It catalyses the reaction 5-carboxyamino-1-(5-phospho-D-ribosyl)imidazole + H(+) = 5-amino-1-(5-phospho-D-ribosyl)imidazole-4-carboxylate. Its pathway is purine metabolism; IMP biosynthesis via de novo pathway; 5-amino-1-(5-phospho-D-ribosyl)imidazole-4-carboxylate from 5-amino-1-(5-phospho-D-ribosyl)imidazole (N5-CAIR route): step 2/2. Catalyzes the conversion of N5-carboxyaminoimidazole ribonucleotide (N5-CAIR) to 4-carboxy-5-aminoimidazole ribonucleotide (CAIR). The protein is N5-carboxyaminoimidazole ribonucleotide mutase of Mycobacterium tuberculosis (strain CDC 1551 / Oshkosh).